We begin with the raw amino-acid sequence, 332 residues long: Anthranilate phosphoribosyltransferase (332 aa).

5-phospho-alpha-D-ribose 1-diphosphate contacts are provided by residues glycine 79, 82–83 (GD), threonine 87, 89–92 (NIST), 107–115 (KHGNRSVSS), and serine 119. Glycine 79 contacts anthranilate. A Mg(2+)-binding site is contributed by serine 91. Asparagine 110 contacts anthranilate. Arginine 165 contacts anthranilate. Mg(2+) is bound by residues aspartate 223 and glutamate 224.

The protein belongs to the anthranilate phosphoribosyltransferase family. As to quaternary structure, homodimer. Requires Mg(2+) as cofactor.

It carries out the reaction N-(5-phospho-beta-D-ribosyl)anthranilate + diphosphate = 5-phospho-alpha-D-ribose 1-diphosphate + anthranilate. Its pathway is amino-acid biosynthesis; L-tryptophan biosynthesis; L-tryptophan from chorismate: step 2/5. Functionally, catalyzes the transfer of the phosphoribosyl group of 5-phosphorylribose-1-pyrophosphate (PRPP) to anthranilate to yield N-(5'-phosphoribosyl)-anthranilate (PRA). This Vibrio vulnificus (strain CMCP6) protein is Anthranilate phosphoribosyltransferase.